We begin with the raw amino-acid sequence, 703 residues long: Polyribonucleotide nucleotidyltransferase (703 aa).

Positions 484 and 490 each coordinate Mg(2+). One can recognise a KH domain in the interval 551–610 (PQMIRMQIDPDKIREVIGPGGKTIHKIVDETGCKIDIEDDGSLFIMATDEEAAKKARFFV). Residues 620–694 (GKTYMGTVKR…RQGRVNLSRK (75 aa)) enclose the S1 motif domain.

It belongs to the polyribonucleotide nucleotidyltransferase family. Mg(2+) serves as cofactor.

The protein resides in the cytoplasm. The catalysed reaction is RNA(n+1) + phosphate = RNA(n) + a ribonucleoside 5'-diphosphate. Its function is as follows. Involved in mRNA degradation. Catalyzes the phosphorolysis of single-stranded polyribonucleotides processively in the 3'- to 5'-direction. The polypeptide is Polyribonucleotide nucleotidyltransferase (Syntrophomonas wolfei subsp. wolfei (strain DSM 2245B / Goettingen)).